Here is a 155-residue protein sequence, read N- to C-terminus: Large ribosomal subunit protein bL9c (155 aa).

Belongs to the bacterial ribosomal protein bL9 family.

It localises to the plastid. The protein localises to the chloroplast. Binds to the 23S rRNA. In Pyropia yezoensis (Susabi-nori), this protein is Large ribosomal subunit protein bL9c.